Consider the following 443-residue polypeptide: Phosphoglucosamine mutase (443 aa).

The active-site Phosphoserine intermediate is Ser100. The Mg(2+) site is built by Ser100, Asp239, Asp241, and Asp243. Ser100 carries the phosphoserine modification.

It belongs to the phosphohexose mutase family. Mg(2+) serves as cofactor. Post-translationally, activated by phosphorylation.

The catalysed reaction is alpha-D-glucosamine 1-phosphate = D-glucosamine 6-phosphate. In terms of biological role, catalyzes the conversion of glucosamine-6-phosphate to glucosamine-1-phosphate. The protein is Phosphoglucosamine mutase of Shewanella sediminis (strain HAW-EB3).